The following is a 146-amino-acid chain: Snaclec mucetin subunit beta (146 aa).

Residues 1–23 form the signal peptide; that stretch reads MGRFIFVSFGLLVVFISLSGTEA. Intrachain disulfides connect cysteine 27-cysteine 38, cysteine 55-cysteine 144, and cysteine 121-cysteine 136. A C-type lectin domain is found at 34 to 145; that stretch reads YDEHCYQVFQ…CSSKRYVVCK (112 aa).

This sequence belongs to the snaclec family. In terms of assembly, dimer and tetramer of heterodimers of alpha and beta subunits ((alphabeta)(2) and (alphabeta)(4)); disulfide-linked. These two multimeric forms are found. Post-translationally, the complex is glycosylated. In terms of tissue distribution, expressed by the venom gland.

It localises to the secreted. Potent platelet activator that acts via GPIb (GP1BA/GP1BB). After activation by the toxin, the receptor is redistributed on platelet surface thanks to cytoskeletal translocation. The indirect activation of integrin alpha-IIb/beta-3 (ITGA2B/ITGB3) also induced by the toxin is downstream the cytoskeletal translocation of GPIb. This chain is Snaclec mucetin subunit beta, found in Protobothrops mucrosquamatus (Taiwan habu).